Here is a 318-residue protein sequence, read N- to C-terminus: Phosphatidylglycerol--prolipoprotein diacylglyceryl transferase (318 aa).

Transmembrane regions (helical) follow at residues 23–43 (PLTI…GAWL), 59–79 (MDII…YHVI), 98–118 (IWEG…GAAI), 124–146 (GVRL…AMGR), 192–212 (FQPT…LLVF), 219–239 (LGAG…RFIF), and 253–273 (LRVN…VFLI). Arginine 146 provides a ligand contact to a 1,2-diacyl-sn-glycero-3-phospho-(1'-sn-glycerol). The segment covering 293-312 (FDTRANGHDPEKHDETDGKG) has biased composition (basic and acidic residues). The interval 293 to 318 (FDTRANGHDPEKHDETDGKGNRHHVP) is disordered.

Belongs to the Lgt family.

It is found in the cell membrane. The enzyme catalyses L-cysteinyl-[prolipoprotein] + a 1,2-diacyl-sn-glycero-3-phospho-(1'-sn-glycerol) = an S-1,2-diacyl-sn-glyceryl-L-cysteinyl-[prolipoprotein] + sn-glycerol 1-phosphate + H(+). The protein operates within protein modification; lipoprotein biosynthesis (diacylglyceryl transfer). In terms of biological role, catalyzes the transfer of the diacylglyceryl group from phosphatidylglycerol to the sulfhydryl group of the N-terminal cysteine of a prolipoprotein, the first step in the formation of mature lipoproteins. This chain is Phosphatidylglycerol--prolipoprotein diacylglyceryl transferase, found in Paenarthrobacter aurescens (strain TC1).